We begin with the raw amino-acid sequence, 297 residues long: MRNYLNINAINKNDVLHLIQRALALKSGEQPKTKSITAVNLFFENSTRTHSSFQMAENQLNWKQIQIDPQTSSMTKGESLVDTLKTLKAIGVDVAVIRHSQNSWYENVLRSEGHAIPQLVNAGDGSGQHPSQSLLDLVTIYQEFGHFEGLKVRIIGDLAHSRVARSNAEILNKLGATVTFSGPKDWQPVDFDSFGEHVDLDVGWSEQDVVMFLRVQHERITHTENQNFSAKKYHEVYGLTESRYENLKENSIIMHPAPVNRDVEIADDLVEAPKSRIFDQMTNGVYARMAILEYVTE.

Positions 48 and 49 each coordinate carbamoyl phosphate. Lys76 lines the L-aspartate pocket. Carbamoyl phosphate-binding residues include Arg98, His129, and Gln132. The L-aspartate site is built by Arg162 and Arg214. Residues Ala257 and Pro258 each coordinate carbamoyl phosphate.

The protein belongs to the aspartate/ornithine carbamoyltransferase superfamily. ATCase family. In terms of assembly, heterododecamer (2C3:3R2) of six catalytic PyrB chains organized as two trimers (C3), and six regulatory PyrI chains organized as three dimers (R2).

It carries out the reaction carbamoyl phosphate + L-aspartate = N-carbamoyl-L-aspartate + phosphate + H(+). It functions in the pathway pyrimidine metabolism; UMP biosynthesis via de novo pathway; (S)-dihydroorotate from bicarbonate: step 2/3. Its function is as follows. Catalyzes the condensation of carbamoyl phosphate and aspartate to form carbamoyl aspartate and inorganic phosphate, the committed step in the de novo pyrimidine nucleotide biosynthesis pathway. The polypeptide is Aspartate carbamoyltransferase catalytic subunit (Leuconostoc mesenteroides subsp. mesenteroides (strain ATCC 8293 / DSM 20343 / BCRC 11652 / CCM 1803 / JCM 6124 / NCDO 523 / NBRC 100496 / NCIMB 8023 / NCTC 12954 / NRRL B-1118 / 37Y)).